The following is a 336-amino-acid chain: Holliday junction branch migration complex subunit RuvB (336 aa).

Residues 4–184 form a large ATPase domain (RuvB-L) region; it reads ADRLVSADSS…FGIVQRLEFY (181 aa). ATP contacts are provided by residues Ile23, Arg24, Gly65, Lys68, Thr69, Thr70, 131 to 133, Arg174, Tyr184, and Arg221; that span reads EDY. Residue Thr69 coordinates Mg(2+). The tract at residues 185–255 is small ATPAse domain (RuvB-S); the sequence is QIPDLQHIVS…IAAQALDMLN (71 aa). The tract at residues 258–336 is head domain (RuvB-H); the sequence is AEGFDYMDRK…HFGITPPEMP (79 aa). DNA is bound by residues Arg294, Arg313, and Arg318.

This sequence belongs to the RuvB family. Homohexamer. Forms an RuvA(8)-RuvB(12)-Holliday junction (HJ) complex. HJ DNA is sandwiched between 2 RuvA tetramers; dsDNA enters through RuvA and exits via RuvB. An RuvB hexamer assembles on each DNA strand where it exits the tetramer. Each RuvB hexamer is contacted by two RuvA subunits (via domain III) on 2 adjacent RuvB subunits; this complex drives branch migration. In the full resolvosome a probable DNA-RuvA(4)-RuvB(12)-RuvC(2) complex forms which resolves the HJ.

It is found in the cytoplasm. The catalysed reaction is ATP + H2O = ADP + phosphate + H(+). Its function is as follows. The RuvA-RuvB-RuvC complex processes Holliday junction (HJ) DNA during genetic recombination and DNA repair, while the RuvA-RuvB complex plays an important role in the rescue of blocked DNA replication forks via replication fork reversal (RFR). RuvA specifically binds to HJ cruciform DNA, conferring on it an open structure. The RuvB hexamer acts as an ATP-dependent pump, pulling dsDNA into and through the RuvAB complex. RuvB forms 2 homohexamers on either side of HJ DNA bound by 1 or 2 RuvA tetramers; 4 subunits per hexamer contact DNA at a time. Coordinated motions by a converter formed by DNA-disengaged RuvB subunits stimulates ATP hydrolysis and nucleotide exchange. Immobilization of the converter enables RuvB to convert the ATP-contained energy into a lever motion, pulling 2 nucleotides of DNA out of the RuvA tetramer per ATP hydrolyzed, thus driving DNA branch migration. The RuvB motors rotate together with the DNA substrate, which together with the progressing nucleotide cycle form the mechanistic basis for DNA recombination by continuous HJ branch migration. Branch migration allows RuvC to scan DNA until it finds its consensus sequence, where it cleaves and resolves cruciform DNA. This chain is Holliday junction branch migration complex subunit RuvB, found in Klebsiella pneumoniae (strain 342).